Consider the following 228-residue polypeptide: Mitochondrial assembly of ribosomal large subunit protein 1 (228 aa).

The tract at residues 53 to 77 (SLTRGLHHGPQPEERTAGDARLQPG) is disordered.

Belongs to the Iojap/RsfS family. Associates with the mitochondrial ribosome large subunit (39S) via interaction with MRPL12 and/or MRPL14. The interaction generates steric hindrance that is expected to prevent premature association of the 28S and 39S ribosomal subunits. Identified in a complex composed of MALSU1, MIEF1 upstream open reading frame protein and NDUFAB1; within the trimeric complex, MIEF1 upstream open reading frame protein functions as a bridging scaffold that interacts with MALSU1 on one side, and with NDUFAB1 on the other side. Interacts with MRPL12 and MRPL14.

Its subcellular location is the mitochondrion matrix. Functionally, required for normal mitochondrial ribosome function and mitochondrial translation. May play a role in ribosome biogenesis by preventing premature association of the 28S and 39S ribosomal subunits. Interacts with mitochondrial ribosomal protein uL14m (MRPL14), probably blocking formation of intersubunit bridge B8, preventing association of the 28S and 39S ribosomal subunits. Addition to isolated mitochondrial ribosomal subunits partially inhibits translation, probably by interfering with the association of the 28S and 39S ribosomal subunits and the formation of functional ribosomes. May also participate in the assembly and/or regulation of the stability of the large subunit of the mitochondrial ribosome. May function as a ribosomal silencing factor. The chain is Mitochondrial assembly of ribosomal large subunit protein 1 (Malsu1) from Mus musculus (Mouse).